The primary structure comprises 158 residues: MIRIGHGFDVHAFGEDRPLIIGGVEVPYHTGFIAHSDGDVALHALTDAILGAAALGDIGKLFPDTDMQYKNADSRGLLREAFRQVQEKGYKIGNVDITIIAQAPKMRPHIDAMRAKIAEDLQCDIEQVNVKATTTEKLGFTGRQEGIACEAVALLIRQ.

A divalent metal cation-binding residues include D9 and H11. Residues 9–11 (DVH) and 35–36 (HS) each bind 4-CDP-2-C-methyl-D-erythritol 2-phosphate. An a divalent metal cation-binding site is contributed by H43. 4-CDP-2-C-methyl-D-erythritol 2-phosphate is bound by residues 57–59 (DIG), 62–66 (FPDTD), 133–136 (TTTE), F140, and R143.

Belongs to the IspF family. As to quaternary structure, homotrimer. A divalent metal cation serves as cofactor.

It catalyses the reaction 4-CDP-2-C-methyl-D-erythritol 2-phosphate = 2-C-methyl-D-erythritol 2,4-cyclic diphosphate + CMP. The protein operates within isoprenoid biosynthesis; isopentenyl diphosphate biosynthesis via DXP pathway; isopentenyl diphosphate from 1-deoxy-D-xylulose 5-phosphate: step 4/6. Functionally, involved in the biosynthesis of isopentenyl diphosphate (IPP) and dimethylallyl diphosphate (DMAPP), two major building blocks of isoprenoid compounds. Catalyzes the conversion of 4-diphosphocytidyl-2-C-methyl-D-erythritol 2-phosphate (CDP-ME2P) to 2-C-methyl-D-erythritol 2,4-cyclodiphosphate (ME-CPP) with a corresponding release of cytidine 5-monophosphate (CMP). This is 2-C-methyl-D-erythritol 2,4-cyclodiphosphate synthase from Haemophilus influenzae (strain PittEE).